We begin with the raw amino-acid sequence, 1181 residues long: Integrin alpha-7 (1181 aa).

A signal peptide spans Met1–Ala33. Residues Phe34 to Trp1082 lie on the Extracellular side of the membrane. FG-GAP repeat units lie at residues Asn35–Cys103, Gln110–Glu175, Glu185–Leu238, Asp292–Leu349, Val350–Gly411, Ile412–Ala467, and Gln471–Arg530. An N-linked (GlcNAc...) asparagine glycan is attached at Asn86. Disulfide bonds link Cys94–Cys103, Cys140–Cys163, and Cys184–Cys197. Ca(2+) is bound by residues Asp372, Asn374, Asp376, Asp380, Asp434, Asn436, Asp438, Asp442, Asp492, Asp494, Asn496, Tyr498, and Asp500. Intrachain disulfides connect Cys539–Cys546, Cys552–Cys615, Cys681–Cys687, Cys781–Cys792, Cys939–Cys994, and Cys1001–Cys1006. Asn786 carries N-linked (GlcNAc...) asparagine glycosylation. Over residues Val950–Glu961 the composition is skewed to basic and acidic residues. The tract at residues Val950–Trp978 is disordered. N-linked (GlcNAc...) asparagine glycosylation is present at Asn989. Asn1025 and Asn1045 each carry an N-linked (GlcNAc...) asparagine glycan. The chain crosses the membrane as a helical span at residues Trp1083 to Leu1103. Topologically, residues Trp1104 to Ala1181 are cytoplasmic. The GFFKR motif motif lies at Gly1107–Arg1111. The disordered stretch occupies residues Glu1138–Ala1181. Tandem repeats lie at residues Asp1157–Pro1160, Asp1165–Pro1168, and Asp1173–Pro1176. The segment at Asp1157–Pro1176 is 3 X 4 AA repeats of D-X-H-P.

This sequence belongs to the integrin alpha chain family. In terms of assembly, heterodimer of an alpha and a beta subunit. The alpha subunit is composed of a heavy and a light chain linked by a disulfide bond. Alpha-7 associates with beta-1. Interacts with COMP. Interacts (via C-terminus intracellular tail region) with CIB1; the interaction is stabilized/increased in a calcium- and magnesium-dependent manner. Post-translationally, ADP-ribosylated on at least two sites of the extracellular domain in skeletal myotubes. A 70 kDa form is created by proteolytic cleavage. Cleavage is elevated during myogenic differentiation and the cleaved form enhances cell adhesion and spreading on laminin. In terms of tissue distribution, isoforms containing segment A are predominantly expressed in skeletal muscle. Isoforms containing segment B are abundantly expressed in skeletal muscle, moderately in cardiac muscle, small intestine, colon, ovary and prostate and weakly in lung and testes. Isoforms containing segment X2D are expressed at low levels in fetal and adult skeletal muscle and in cardiac muscle, but are not detected in myoblasts and myotubes. In muscle fibers isoforms containing segment A and B are expressed at myotendinous and neuromuscular junctions; isoforms containing segment C are expressed at neuromuscular junctions and at extrasynaptic sites. Isoforms containing segments X1 or X2 or, at low levels, X1X2 are expressed in fetal and adult skeletal muscle (myoblasts and myotubes) and cardiac muscle.

It is found in the membrane. In terms of biological role, integrin alpha-7/beta-1 is the primary laminin receptor on skeletal myoblasts and adult myofibers. During myogenic differentiation, it may induce changes in the shape and mobility of myoblasts, and facilitate their localization at laminin-rich sites of secondary fiber formation. It is involved in the maintenance of the myofibers cytoarchitecture as well as for their anchorage, viability and functional integrity. Isoform Alpha-7X2B and isoform Alpha-7X1B promote myoblast migration on laminin 1 and laminin 2/4, but isoform Alpha-7X1B is less active on laminin 1 (In vitro). Acts as a Schwann cell receptor for laminin-2. Acts as a receptor of COMP and mediates its effect on vascular smooth muscle cells (VSMCs) maturation. Required to promote contractile phenotype acquisition in differentiated airway smooth muscle (ASM) cells. This Homo sapiens (Human) protein is Integrin alpha-7 (ITGA7).